The chain runs to 251 residues: Ribosome maturation factor RimP (251 aa).

The interval 176–251 is disordered; it reads SLRRGSAPPQ…ARLKNRDTLH (76 aa). Positions 186–196 are enriched in acidic residues; sequence DGEEGDEEEGA. Residues 216–226 show a composition bias toward basic and acidic residues; sequence PKLDKKSDKPV.

This sequence belongs to the RimP family.

Its subcellular location is the cytoplasm. Required for maturation of 30S ribosomal subunits. This Methylorubrum extorquens (strain PA1) (Methylobacterium extorquens) protein is Ribosome maturation factor RimP.